A 738-amino-acid polypeptide reads, in one-letter code: Propionyl-CoA carboxylase alpha chain, mitochondrial (738 aa).

In terms of domain architecture, Biotin carboxylation spans 62–509 (KFDKILIANR…TTKYLPEVYP (448 aa)). ATP is bound by residues Lys177, 209–270 (SREI…PRHI), Glu261, and Asn296. An ATP-grasp domain is found at 181–378 (KKIATAARVS…IVQQMLRVAY (198 aa)). Mg(2+)-binding residues include Glu336, Glu349, and Asn351. Mn(2+) contacts are provided by Glu336, Glu349, and Asn351. The active site involves Arg353. Phe409 is a binding site for biotin. One can recognise a Biotinyl-binding domain in the interval 663 to 738 (KAKVDLSTVV…DEGEVLVELE (76 aa)). Lys704 carries the post-translational modification N6-biotinyllysine.

The holoenzyme is a dodecamer composed of 6 alpha subunits and 6 beta subunits. Interacts with sir-2.2. Requires biotin as cofactor. The cofactor is Mg(2+). Mn(2+) is required as a cofactor. In terms of processing, the biotin cofactor is covalently attached to the C-terminal biotinyl-binding domain and is required for the catalytic activity.

Its subcellular location is the mitochondrion matrix. The enzyme catalyses propanoyl-CoA + hydrogencarbonate + ATP = (S)-methylmalonyl-CoA + ADP + phosphate + H(+). It carries out the reaction butanoyl-CoA + hydrogencarbonate + ATP = (2S)-ethylmalonyl-CoA + ADP + phosphate + H(+). The protein operates within metabolic intermediate metabolism; propanoyl-CoA degradation; succinyl-CoA from propanoyl-CoA: step 1/3. In terms of biological role, this is one of the 2 subunits of the biotin-dependent propionyl-CoA carboxylase (PCC), a mitochondrial enzyme involved in the catabolism of odd chain fatty acids, branched-chain amino acids isoleucine, threonine, methionine, and valine and other metabolites. Propionyl-CoA carboxylase catalyzes the carboxylation of propionyl-CoA/propanoyl-CoA to D-methylmalonyl-CoA/(S)-methylmalonyl-CoA. Within the holoenzyme, the alpha subunit catalyzes the ATP-dependent carboxylation of the biotin carried by the biotin carboxyl carrier (BCC) domain, while the beta subunit then transfers the carboxyl group from carboxylated biotin to propionyl-CoA. Propionyl-CoA carboxylase also significantly acts on butyryl-CoA/butanoyl-CoA, which is converted to ethylmalonyl-CoA/(2S)-ethylmalonyl-CoA. Other alternative minor substrates include (2E)-butenoyl-CoA/crotonoyl-CoA. The chain is Propionyl-CoA carboxylase alpha chain, mitochondrial (pcca-1) from Caenorhabditis briggsae.